Reading from the N-terminus, the 192-residue chain is Ion-translocating oxidoreductase complex subunit A (192 aa).

The next 6 membrane-spanning stretches (helical) occupy residues leucine 5–leucine 25, isoleucine 39–valine 59, leucine 65–valine 85, alanine 102–leucine 122, alanine 134–methionine 154, and alanine 171–valine 191.

Belongs to the NqrDE/RnfAE family. The complex is composed of six subunits: RnfA, RnfB, RnfC, RnfD, RnfE and RnfG.

It is found in the cell inner membrane. Functionally, part of a membrane-bound complex that couples electron transfer with translocation of ions across the membrane. This Shewanella oneidensis (strain ATCC 700550 / JCM 31522 / CIP 106686 / LMG 19005 / NCIMB 14063 / MR-1) protein is Ion-translocating oxidoreductase complex subunit A.